A 265-amino-acid polypeptide reads, in one-letter code: Selenoprotein Pb (265 aa).

The signal sequence occupies residues 1–18; that stretch reads MQALWPLLLSALPALLGA. Asn-28 is a glycosylation site (N-linked (GlcNAc...) asparagine). A non-standard amino acid (selenocysteine) is located at residue Sec-64. N-linked (GlcNAc...) asparagine glycosylation is found at Asn-88, Asn-178, Asn-184, and Asn-207. Residues 188 to 265 are disordered; it reads SESSDSTKND…SHQEHVHNHR (78 aa). Over residues 201 to 211 the composition is skewed to polar residues; the sequence is ENNQRPNSTEP. The segment covering 215–231 has biased composition (basic residues); it reads AHHHHHQQHEPHHHHHN. The segment covering 239–265 has biased composition (basic and acidic residues); sequence KSGDSDVTGKPKEPPHHSHQEHVHNHR.

Its subcellular location is the secreted. In terms of biological role, might be responsible for some of the extracellular antioxidant defense properties of selenium. This Danio rerio (Zebrafish) protein is Selenoprotein Pb (sepp1b).